The sequence spans 306 residues: Ribosomal protein L11 methyltransferase (306 aa).

Positions 154, 179, 201, and 242 each coordinate S-adenosyl-L-methionine.

This sequence belongs to the methyltransferase superfamily. PrmA family.

It localises to the cytoplasm. The enzyme catalyses L-lysyl-[protein] + 3 S-adenosyl-L-methionine = N(6),N(6),N(6)-trimethyl-L-lysyl-[protein] + 3 S-adenosyl-L-homocysteine + 3 H(+). Its function is as follows. Methylates ribosomal protein L11. The protein is Ribosomal protein L11 methyltransferase of Xanthomonas campestris pv. campestris (strain 8004).